Reading from the N-terminus, the 42-residue chain is Photosystem II reaction center protein J (42 aa).

A helical transmembrane segment spans residues 10–30; sequence IPLWLVGTVAGTAALTLVAVF.

The protein belongs to the PsbJ family. In terms of assembly, PSII is composed of 1 copy each of membrane proteins PsbA, PsbB, PsbC, PsbD, PsbE, PsbF, PsbH, PsbI, PsbJ, PsbK, PsbL, PsbM, PsbT, PsbX, PsbY, PsbZ, Psb30/Ycf12, at least 3 peripheral proteins of the oxygen-evolving complex and a large number of cofactors. It forms dimeric complexes.

It is found in the plastid. The protein localises to the chloroplast thylakoid membrane. Functionally, one of the components of the core complex of photosystem II (PSII). PSII is a light-driven water:plastoquinone oxidoreductase that uses light energy to abstract electrons from H(2)O, generating O(2) and a proton gradient subsequently used for ATP formation. It consists of a core antenna complex that captures photons, and an electron transfer chain that converts photonic excitation into a charge separation. In Chlorella vulgaris (Green alga), this protein is Photosystem II reaction center protein J.